A 468-amino-acid polypeptide reads, in one-letter code: Mitochondrial distribution and morphology protein 10 (468 aa).

The segment covering 370–386 has biased composition (basic and acidic residues); the sequence is ERDGLPGIQRDDHDMHH. Residues 370 to 394 are disordered; the sequence is ERDGLPGIQRDDHDMHHHPQRPHAS.

This sequence belongs to the MDM10 family. As to quaternary structure, component of the ER-mitochondria encounter structure (ERMES) or MDM complex, composed of MMM1, MDM10, MDM12 and MDM34. Associates with the mitochondrial outer membrane sorting assembly machinery SAM(core) complex.

Its subcellular location is the mitochondrion outer membrane. Component of the ERMES/MDM complex, which serves as a molecular tether to connect the endoplasmic reticulum and mitochondria. Components of this complex are involved in the control of mitochondrial shape and protein biogenesis and may function in phospholipid exchange. MDM10 is involved in the late assembly steps of the general translocase of the mitochondrial outer membrane (TOM complex). Functions in the TOM40-specific route of the assembly of outer membrane beta-barrel proteins, including the association of TOM40 with the receptor TOM22 and small TOM proteins. Can associate with the SAM(core) complex as well as the MDM12-MMM1 complex, both involved in late steps of the major beta-barrel assembly pathway, that is responsible for biogenesis of all outer membrane beta-barrel proteins. May act as a switch that shuttles between both complexes and channels precursor proteins into the TOM40-specific pathway. Plays a role in mitochondrial morphology and in the inheritance of mitochondria. The polypeptide is Mitochondrial distribution and morphology protein 10 (Ajellomyces dermatitidis (strain ER-3 / ATCC MYA-2586) (Blastomyces dermatitidis)).